Consider the following 179-residue polypeptide: Ubiquitin-conjugating enzyme E2 C (179 aa).

Position 2 is an N-acetylalanine (Ala-2). Position 3 is a phosphoserine (Ser-3). A UBC core domain is found at 30–175 (PVGKRLQQEL…LQETYSKQVS (146 aa)). Residue Cys-114 is the Glycyl thioester intermediate of the active site.

Belongs to the ubiquitin-conjugating enzyme family. In terms of assembly, component of the APC/C complex, composed of at least 14 distinct subunits that assemble into a complex of at least 19 chains with a combined molecular mass of around 1.2 MDa. Within this complex, directly interacts with ANAPC2. Autoubiquitinated by the APC/C complex, leading to its degradation by the proteasome. Its degradation plays a central role in APC/C regulation, allowing cyclin-A accumulation before S phase entry. APC/C substrates inhibit the autoubiquitination of UBE2C/UBCH10 but not its E2 function, hence APC/C remaining active until its substrates have been destroyed.

It catalyses the reaction S-ubiquitinyl-[E1 ubiquitin-activating enzyme]-L-cysteine + [E2 ubiquitin-conjugating enzyme]-L-cysteine = [E1 ubiquitin-activating enzyme]-L-cysteine + S-ubiquitinyl-[E2 ubiquitin-conjugating enzyme]-L-cysteine.. The catalysed reaction is S-ubiquitinyl-[E1 ubiquitin-activating enzyme]-L-cysteine + [acceptor protein]-L-lysine = [E1 ubiquitin-activating enzyme]-L-cysteine + N(6)-monoubiquitinyl-[acceptor protein]-L-lysine.. The protein operates within protein modification; protein ubiquitination. Functionally, accepts ubiquitin from the E1 complex and catalyzes its covalent attachment to other proteins. In vitro catalyzes 'Lys-11'- and 'Lys-48'-linked polyubiquitination. Acts as an essential factor of the anaphase promoting complex/cyclosome (APC/C), a cell cycle-regulated ubiquitin ligase that controls progression through mitosis. Acts by initiating 'Lys-11'-linked polyubiquitin chains on APC/C substrates, leading to the degradation of APC/C substrates by the proteasome and promoting mitotic exit. The protein is Ubiquitin-conjugating enzyme E2 C (Ube2c) of Mus musculus (Mouse).